The following is a 373-amino-acid chain: Filamin-binding LIM protein 1 (373 aa).

A filamin-binding region spans residues 1 to 70 (MASKPEKRVA…SPWTTPGRAA (70 aa)). Disordered stretches follow at residues 41 to 119 (RPWE…PSEE) and 135 to 176 (QLHL…PVEK). Pro residues predominate over residues 104 to 114 (LPPPPPPPPVL). LIM zinc-binding domains lie at 181 to 242 (DICA…TLER), 243 to 300 (CGKC…RKFA), and 301 to 370 (PVCS…RSAA). The tract at residues 276-373 (IGDESFALGS…HVKRSAAGCC (98 aa)) is FERMT2-binding.

In terms of assembly, interacts with NKX2-5. Isoform 1 and isoform 3 interact with FERMT2, FLNA, FLNB and FLNC. Isoform 2 interacts with FLNB. Isoform 1 and isoform 3 are expressed in heart, kidney, lung, pancreas, placenta and platelets. Isoform 2 is expressed in brain, heart, kidney, lung, pancreas, placenta, skeletal muscle and platelets.

The protein resides in the cell junction. It is found in the focal adhesion. The protein localises to the cytoplasm. Its subcellular location is the cytoskeleton. It localises to the stress fiber. Its function is as follows. Serves as an anchoring site for cell-ECM adhesion proteins and filamin-containing actin filaments. Is implicated in cell shape modulation (spreading) and motility. May participate in the regulation of filamin-mediated cross-linking and stabilization of actin filaments. May also regulate the assembly of filamin-containing signaling complexes that control actin assembly. Promotes dissociation of FLNA from ITGB3 and ITGB7. Promotes activation of integrins and regulates integrin-mediated cell-cell adhesion. The protein is Filamin-binding LIM protein 1 (FBLIM1) of Homo sapiens (Human).